We begin with the raw amino-acid sequence, 421 residues long: MACARPLISVYSEKGESSGKNVTLPAVFKAPIRPDIVNFVHTNLRKNNRQPYAVSELAGHQTSAESWGTGRAVARIPRVRGGGTHRSGQGAFGNMCRGGRMFAPTKTWRRWHRRVNTTQKRYAICSALAASALPALVMSKGHCVEEVPELPLVVEDKVESYKKTKEAVQLLKKLKAWNDIKKVYASQRMRAGKGKMRNRRRIQRRGPCIIYNEDNGIIKAFRNIPGITLLNVSKLNILKLAPGGHVGRFCIWTESAFRKLDELYGTWRKAASLKSNYNLPMHKMMNTDLSRILKSPEIQRALRAPRKKIHRRVLKKNPLKNLRIMLKLNPYAKTMRRNTILRQARNHKLRVKKLEAAAAALAAKSEKIVPEKGAGDKKPAVGKKGKKPVDAKKLKKPAGKKVVTKKPAEKKPTTEEKKSAA.

At Ala-2 the chain carries N-acetylalanine. The residue at position 14 (Lys-14) is an N6-acetyllysine. Arg-97 bears the Omega-N-methylarginine mark. At Lys-106 the chain carries N6-acetyllysine. A Glycyl lysine isopeptide (Lys-Gly) (interchain with G-Cter in SUMO2) cross-link involves residue Lys-239. N6-acetyllysine is present on Lys-259. Residue Thr-266 is modified to Phosphothreonine. 2 positions are modified to phosphoserine: Ser-290 and Ser-295. Arg-300 is modified (citrulline). Lys-327 participates in a covalent cross-link: Glycyl lysine isopeptide (Lys-Gly) (interchain with G-Cter in SUMO2). N6-acetyllysine is present on residues Lys-333 and Lys-353. Residue Lys-364 is modified to N6-acetyllysine; alternate. Residue Lys-364 forms a Glycyl lysine isopeptide (Lys-Gly) (interchain with G-Cter in SUMO1); alternate linkage. Residue Ser-365 is modified to Phosphoserine. The span at 365–379 (SEKIVPEKGAGDKKP) shows a compositional bias: basic and acidic residues. The disordered stretch occupies residues 365–421 (SEKIVPEKGAGDKKPAVGKKGKKPVDAKKLKKPAGKKVVTKKPAEKKPTTEEKKSAA). Residues 393–404 (KLKKPAGKKVVT) show a composition bias toward basic residues. A compositionally biased stretch (basic and acidic residues) spans 406-421 (KPAEKKPTTEEKKSAA).

This sequence belongs to the universal ribosomal protein uL4 family. In terms of assembly, component of the large ribosomal subunit. May bind IPO9 with low affinity. Interacts with RBM3. In terms of processing, citrullinated by PADI4.

It is found in the cytoplasm. Component of the large ribosomal subunit. The ribosome is a large ribonucleoprotein complex responsible for the synthesis of proteins in the cell. The sequence is that of Large ribosomal subunit protein uL4 (Rpl4) from Rattus norvegicus (Rat).